Here is a 489-residue protein sequence, read N- to C-terminus: Mitochondrial-processing peptidase subunit beta (489 aa).

The N-terminal 45 residues, 1–45 (MAAAALSRTLLPEARRRLWGFTRRLPLRRAAAQPLYFGGDRLRST), are a transit peptide targeting the mitochondrion. Residue H101 coordinates Zn(2+). E104 (proton acceptor) is an active-site residue. Zn(2+) is bound by residues H105 and E181.

Belongs to the peptidase M16 family. As to quaternary structure, heterodimer of PMPCA (alpha) and PMPCB (beta) subunits, forming the mitochondrial processing protease (MPP) in which PMPCA is involved in substrate recognition and binding and PMPCB is the catalytic subunit. Zn(2+) serves as cofactor.

The protein resides in the mitochondrion matrix. The enzyme catalyses Release of N-terminal transit peptides from precursor proteins imported into the mitochondrion, typically with Arg in position P2.. Its activity is regulated as follows. Binding to PMPCA is required for catalytic activity. Functionally, catalytic subunit of the essential mitochondrial processing protease (MPP), which cleaves the mitochondrial sequence off newly imported precursors proteins. Preferentially, cleaves after an arginine at position P2. Required for PINK1 turnover by coupling PINK1 mitochondrial import and cleavage, which results in subsequent PINK1 proteolysis. The protein is Mitochondrial-processing peptidase subunit beta (Pmpcb) of Mus musculus (Mouse).